A 477-amino-acid polypeptide reads, in one-letter code: Bifunctional protein HldE (477 aa).

The interval 1–318 (MKVNLPAFER…ENAVRGRADT (318 aa)) is ribokinase. Residue 195-198 (NLSE) participates in ATP binding. The active site involves Asp264. The interval 344–477 (MTNGVFDILH…IKKIQTESEK (134 aa)) is cytidylyltransferase.

The protein in the N-terminal section; belongs to the carbohydrate kinase PfkB family. It in the C-terminal section; belongs to the cytidylyltransferase family. As to quaternary structure, homodimer.

The catalysed reaction is D-glycero-beta-D-manno-heptose 7-phosphate + ATP = D-glycero-beta-D-manno-heptose 1,7-bisphosphate + ADP + H(+). The enzyme catalyses D-glycero-beta-D-manno-heptose 1-phosphate + ATP + H(+) = ADP-D-glycero-beta-D-manno-heptose + diphosphate. Its pathway is nucleotide-sugar biosynthesis; ADP-L-glycero-beta-D-manno-heptose biosynthesis; ADP-L-glycero-beta-D-manno-heptose from D-glycero-beta-D-manno-heptose 7-phosphate: step 1/4. It functions in the pathway nucleotide-sugar biosynthesis; ADP-L-glycero-beta-D-manno-heptose biosynthesis; ADP-L-glycero-beta-D-manno-heptose from D-glycero-beta-D-manno-heptose 7-phosphate: step 3/4. Its function is as follows. Catalyzes the phosphorylation of D-glycero-D-manno-heptose 7-phosphate at the C-1 position to selectively form D-glycero-beta-D-manno-heptose-1,7-bisphosphate. In terms of biological role, catalyzes the ADP transfer from ATP to D-glycero-beta-D-manno-heptose 1-phosphate, yielding ADP-D-glycero-beta-D-manno-heptose. This chain is Bifunctional protein HldE, found in Salmonella enteritidis PT4 (strain P125109).